The primary structure comprises 129 residues: MSDVAETVVAQEPEVVEPVEEKPTETGSDDVVVIDEKTSEQNGEKTEETQAEATEEKNETEAEEADKDKAVENGEAKDTNGNDRKRVSSAHEEAPVADAEEDAPLTKKSKVEDEVDVAASGDAPAVAAE.

Residues 1 to 13 are compositionally biased toward low complexity; that stretch reads MSDVAETVVAQEP. Positions 1-129 are disordered; sequence MSDVAETVVA…SGDAPAVAAE (129 aa). The span at 34 to 94 shows a compositional bias: basic and acidic residues; sequence IDEKTSEQNG…KRVSSAHEEA (61 aa). The span at 117-129 shows a compositional bias: low complexity; it reads VAASGDAPAVAAE.

This is an uncharacterized protein from Caenorhabditis elegans.